The following is a 117-amino-acid chain: uncharacterized protein (117 aa).

This is an uncharacterized protein from Bacillus subtilis (strain 168).